A 198-amino-acid chain; its full sequence is uncharacterized protein (198 aa).

Positions Met-1–Thr-23 are disordered. Residues Ser-9–Thr-23 are compositionally biased toward polar residues. The Mo-molybdopterin site is built by Cys-75, His-144, and Arg-149.

Mo-molybdopterin is required as a cofactor.

This is an uncharacterized protein from Bacillus subtilis (strain 168).